The following is a 538-amino-acid chain: Chaperonin GroEL (538 aa).

ATP-binding positions include 30-33 (TLGP), 87-91 (DGTTT), Gly-415, 479-481 (DAA), and Asp-495.

Belongs to the chaperonin (HSP60) family. Forms a cylinder of 14 subunits composed of two heptameric rings stacked back-to-back. Interacts with the co-chaperonin GroES.

The protein localises to the cytoplasm. It catalyses the reaction ATP + H2O + a folded polypeptide = ADP + phosphate + an unfolded polypeptide.. Functionally, together with its co-chaperonin GroES, plays an essential role in assisting protein folding. The GroEL-GroES system forms a nano-cage that allows encapsulation of the non-native substrate proteins and provides a physical environment optimized to promote and accelerate protein folding. This chain is Chaperonin GroEL, found in Dictyoglomus thermophilum (strain ATCC 35947 / DSM 3960 / H-6-12).